The following is a 681-amino-acid chain: MSLSRKLLVIFFTWITALSMSKPIFVSSDNMNFTFKSFTIRNLTFLGDSHLRNGVVGLTRELGVPDTSSGTVIYNNPIRFYDPDSNTTASFSTHFSFTVQNLNPDPTSAGDGLAFFLSHDNDTLGSPGGYLGLVNSSQPMKNRFVAIEFDTKLDPHFNDPNGNHIGLDVDSLNSISTSDPLLSSQIDLKSGKSITSWIDYKNDLRLLNVFLSYTDPVTTTKKPEKPLLSVNIDLSPFLNGEMYVGFSGSTEGSTEIHLIENWSFKTSGFLPVRSKSNHLHNVSDSSVVNDDPVVIPSKKRRHRHNLAIGLGISCPVLICLALFVFGYFTLKKWKSVKAEKELKTELITGLREFSYKELYTATKGFHSSRVIGRGAFGNVYRAMFVSSGTISAVKRSRHNSTEGKTEFLAELSIIACLRHKNLVQLQGWCNEKGELLLVYEFMPNGSLDKILYQESQTGAVALDWSHRLNIAIGLASALSYLHHECEQQVVHRDIKTSNIMLDINFNARLGDFGLARLTEHDKSPVSTLTAGTMGYLAPEYLQYGTATEKTDAFSYGVVILEVACGRRPIDKEPESQKTVNLVDWVWRLHSEGRVLEAVDERLKGEFDEEMMKKLLLVGLKCAHPDSNERPSMRRVLQILNNEIEPSPVPKMKPTLSFSCGLSLDDIVSEDEEGDSIVYVVS.

An N-terminal signal peptide occupies residues 1-21; that stretch reads MSLSRKLLVIFFTWITALSMS. Over 22-305 the chain is Extracellular; the sequence is KPIFVSSDNM…PSKKRRHRHN (284 aa). Residues 30-265 are legume-lectin like; the sequence is NMNFTFKSFT…IHLIENWSFK (236 aa). N-linked (GlcNAc...) asparagine glycosylation is found at Asn32, Asn42, Asn86, Asn121, Asn135, Asn261, and Asn281. A helical membrane pass occupies residues 306 to 326; the sequence is LAIGLGISCPVLICLALFVFG. The Cytoplasmic portion of the chain corresponds to 327–681; sequence YFTLKKWKSV…EGDSIVYVVS (355 aa). The 279-residue stretch at 365 to 643 folds into the Protein kinase domain; that stretch reads FHSSRVIGRG…RVLQILNNEI (279 aa). Residues 371–379 and Lys394 contribute to the ATP site; that span reads IGRGAFGNV. Residue Asp493 is the Proton acceptor of the active site.

This sequence in the C-terminal section; belongs to the protein kinase superfamily. Ser/Thr protein kinase family. In the N-terminal section; belongs to the leguminous lectin family.

The protein resides in the cell membrane. It carries out the reaction L-seryl-[protein] + ATP = O-phospho-L-seryl-[protein] + ADP + H(+). The catalysed reaction is L-threonyl-[protein] + ATP = O-phospho-L-threonyl-[protein] + ADP + H(+). Involved in resistance response to the pathogenic oomycetes Phytophthora infestans and Phytophthora capsici. This chain is Probable L-type lectin-domain containing receptor kinase S.7, found in Arabidopsis thaliana (Mouse-ear cress).